The primary structure comprises 241 residues: Lactate utilization protein C (241 aa).

The protein belongs to the LutC/YkgG family.

Functionally, is involved in L-lactate degradation and allows cells to grow with lactate as the sole carbon source. The sequence is that of Lactate utilization protein C from Bacillus velezensis (strain DSM 23117 / BGSC 10A6 / LMG 26770 / FZB42) (Bacillus amyloliquefaciens subsp. plantarum).